The following is a 401-amino-acid chain: L-rhamnonate dehydratase (401 aa).

The substrate site is built by His-29 and Arg-55. Residues Asp-222, Glu-248, and Glu-276 each coordinate Mg(2+). His-325 acts as the Proton acceptor in catalysis. Residue Glu-345 participates in substrate binding.

The protein belongs to the mandelate racemase/muconate lactonizing enzyme family. RhamD subfamily. Homooctamer; tetramer of dimers. Mg(2+) serves as cofactor.

The enzyme catalyses L-rhamnonate = 2-dehydro-3-deoxy-L-rhamnonate + H2O. Functionally, catalyzes the dehydration of L-rhamnonate to 2-keto-3-deoxy-L-rhamnonate (KDR). Can also dehydrate L-lyxonate, L-mannonate and D-gulonate, although less efficiently, but not 2-keto-4-hydroxyheptane-1,7-dioate. The chain is L-rhamnonate dehydratase (rhmD) from Escherichia coli (strain K12).